The primary structure comprises 208 residues: Na(+)-translocating NADH-quinone reductase subunit D (208 aa).

A run of 5 helical transmembrane segments spans residues 42–62 (FVMA…VSLI), 72–92 (IIVQ…ILKA), 103–123 (VFVG…AFAM), 131–151 (FVDG…VAFF), and 178–198 (NGLF…IWGL).

This sequence belongs to the NqrDE/RnfAE family. As to quaternary structure, composed of six subunits; NqrA, NqrB, NqrC, NqrD, NqrE and NqrF.

Its subcellular location is the cell inner membrane. The catalysed reaction is a ubiquinone + n Na(+)(in) + NADH + H(+) = a ubiquinol + n Na(+)(out) + NAD(+). In terms of biological role, NQR complex catalyzes the reduction of ubiquinone-1 to ubiquinol by two successive reactions, coupled with the transport of Na(+) ions from the cytoplasm to the periplasm. NqrA to NqrE are probably involved in the second step, the conversion of ubisemiquinone to ubiquinol. This is Na(+)-translocating NADH-quinone reductase subunit D from Haemophilus influenzae (strain 86-028NP).